Consider the following 311-residue polypeptide: MNETLSGVVTRVTGATYIVETGDGPKVRCRTVPSTVSENEGSNLVAVGDRVEFRPKASETEMAEGVIVRVEERRSVLERRREVRRNRSKEKEQVIAANIDQIVLITSFDDPPFNSRLVDRYLVFAESEHLPLLIVVNKIDLDEEGMVEEDLEVYRNLDCNICLVSAEDGRGIEELRELLRDRLSAFSGHSGVGKSTLINLLVGREELRTAETSGKTGKGVHTTTSSAMFQLPGGGYVIDTPGIREFNLAGITRENLRFYYTEFLRFMPECAFSSCSHTVEPGCAVIAAVESGRIDAERYESYLALLDSLDE.

A CP-type G domain is found at 88–246; the sequence is SKEKEQVIAA…VIDTPGIREF (159 aa). Residues 137 to 140 and 188 to 196 contribute to the GTP site; these read NKID and GHSGVGKST. Zn(2+) contacts are provided by Cys270, Cys275, His277, and Cys283.

It belongs to the TRAFAC class YlqF/YawG GTPase family. RsgA subfamily. As to quaternary structure, monomer. Associates with 30S ribosomal subunit, binds 16S rRNA. Requires Zn(2+) as cofactor.

Its subcellular location is the cytoplasm. In terms of biological role, one of several proteins that assist in the late maturation steps of the functional core of the 30S ribosomal subunit. Helps release RbfA from mature subunits. May play a role in the assembly of ribosomal proteins into the subunit. Circularly permuted GTPase that catalyzes slow GTP hydrolysis, GTPase activity is stimulated by the 30S ribosomal subunit. The polypeptide is Small ribosomal subunit biogenesis GTPase RsgA (Chlorobaculum parvum (strain DSM 263 / NCIMB 8327) (Chlorobium vibrioforme subsp. thiosulfatophilum)).